A 1026-amino-acid polypeptide reads, in one-letter code: P3N-PIPO polyprotein (1026 aa).

The Peptidase S30 domain occupies 165–308 (RMSEASLQLF…KEQSNEIVHY (144 aa)). Residues histidine 216, aspartate 225, and serine 259 each act as for P1 proteinase activity in the active site. Residues 360–363 (KITC) carry the Involved in interaction with stylet and aphid transmission motif. Positions 618–620 (PTK) match the Involved in virions binding and aphid transmission motif. In terms of domain architecture, Peptidase C6 spans 644 to 766 (MFIAKAGYCY…DSSMKTYLVG (123 aa)). Residues cysteine 652 and histidine 725 each act as for helper component proteinase activity in the active site.

It belongs to the potyviridae P3N-PIPO polyprotein family. In terms of assembly, interacts (via PIPO domain) with host PCaP1 protein; this interaction may help to anchor the movement complex to the plasma membrane from which the complex could move to the plasmodesmata. In terms of processing, potyviral RNA is expressed as two polyproteins which undergo post-translational proteolytic processing. Genome polyprotein is processed by NIa-pro, P1 and HC-pro proteinases resulting in the production of at least ten individual proteins. P3N-PIPO is cleaved by P1 and HC-pro proteinases resulting in the production of three individual proteins. The P1 proteinase and the HC-pro cleave only their respective C-termini autocatalytically.

The protein localises to the host cell junction. The protein resides in the host plasmodesma. The catalysed reaction is Hydrolyzes a Gly-|-Gly bond at its own C-terminus, commonly in the sequence -Tyr-Xaa-Val-Gly-|-Gly, in the processing of the potyviral polyprotein.. Functionally, required for aphid transmission and also has proteolytic activity. Only cleaves a Gly-Gly dipeptide at its own C-terminus. Interacts with virions and aphid stylets. Acts as a suppressor of RNA-mediated gene silencing, also known as post-transcriptional gene silencing (PTGS), a mechanism of plant viral defense that limits the accumulation of viral RNAs. May have RNA-binding activity. Allows efficient cell to cell propagation, by bypassing the host cell wall barrier. Transports viral genome to neighboring plant cells directly through plasmosdesmata, without any budding. The sequence is that of P3N-PIPO polyprotein from Prunus armeniaca (Apricot).